Here is an 815-residue protein sequence, read N- to C-terminus: Kinesin heavy chain (815 aa).

In terms of domain architecture, Kinesin motor spans 11-329 (GVQVFCRIRP…LLFGARAKTI (319 aa)). Residue 88–95 (GQTSSGKT) coordinates ATP. 3 coiled-coil regions span residues 335–374 (INEE…RWRA), 422–554 (PITD…LDEC), and 695–785 (PAQK…RMNA). Residues 788-815 (IVKPIRPGQVYTSPSAGMSQGAPNGSNA) are disordered. Over residues 797–815 (VYTSPSAGMSQGAPNGSNA) the composition is skewed to polar residues.

Belongs to the TRAFAC class myosin-kinesin ATPase superfamily. Kinesin family. Kinesin subfamily. As to quaternary structure, oligomer composed of two heavy chains and two light chains.

Its subcellular location is the cytoplasm. It is found in the cytoskeleton. Functionally, microtubule-dependent motor protein required for organelle transport. Plays a role in endosome transport. Required for the transport of mitochondria along the axon of motor neurons. Involved in the nuclear migration of hyp7 hypodermal precursor cells. Required for the formation of dendritic branches of PVD sensory neurons. In non-ciliated neurons such as the PVD and PHC neurons, required for the organization of minus-end out microtubules in dendrites. Also required for the minus-end out orientation of microtubules in dendrites of AQR gas-sensing neurons. Involved in the localization of unc-33 to neurites. Positively regulates cilium position and dendrite morphogenesis in the postembryonic AQR and PQR gas-sensing neurons. Plays a more prominent role in regulating dendrite morphogenesis in AQR than in PQR neurons. Plays a role in regulating the localization of grdn-1 to the distal dendrites of AQR sensory neurons. The polypeptide is Kinesin heavy chain (Caenorhabditis elegans).